The following is a 300-amino-acid chain: MSAIKEIPVNLPKLLTLFKTIVPKLTNDKYKGQYGRIGVIGGSLEYTGAPFFAAISSMKVGADLSHVFCQANAAPVIKSYSPDLIVHPVLDCLDAVDKIQPWLERLHVIVIGPGLGREPLILQTVTNVLKLCTKLQKPIVIDADGLFILNDNIDLVSGQRNIILTPNAMEFRRLFGEDVNDVRQKMSCLGDGVVVLEKGVNDKIHIPHTNEVYSMPTGGSGRRCGGQGDLLSGSLATFFYWSLQSNQPNPAYIAACASSYLVKRANSTAFKKFGRSLLASDMINEISAVFRSDFEDAETG.

Positions 14-293 (LLTLFKTIVP…NEISAVFRSD (280 aa)) constitute a YjeF C-terminal domain. Residues Gly114 and 167–173 (NAMEFRR) each bind (6S)-NADPHX. Residues 198–202 (KGVND) and 219–228 (GSGRRCGGQG) each bind ATP. Asp229 contributes to the (6S)-NADPHX binding site.

It belongs to the NnrD/CARKD family. Mg(2+) is required as a cofactor.

It carries out the reaction (6S)-NADHX + ATP = ADP + phosphate + NADH + H(+). The enzyme catalyses (6S)-NADPHX + ATP = ADP + phosphate + NADPH + H(+). In terms of biological role, catalyzes the dehydration of the S-form of NAD(P)HX at the expense of ATP, which is converted to ADP. Together with NAD(P)HX epimerase, which catalyzes the epimerization of the S- and R-forms, the enzyme allows the repair of both epimers of NAD(P)HX, a damaged form of NAD(P)H that is a result of enzymatic or heat-dependent hydration. This is ATP-dependent (S)-NAD(P)H-hydrate dehydratase from Drosophila pseudoobscura pseudoobscura (Fruit fly).